The chain runs to 334 residues: Heme A synthase (334 aa).

5 helical membrane passes run 6–26, 93–113, 119–139, 154–174, and 189–209; these read ITRW…IGGI, GRIT…QGVI, LPYI…WYMV, LAFH…QLIK, and LIFS…GALV. H253 contributes to the heme binding site. 3 helical membrane passes run 255–275, 282–302, and 305–325; these read LGGF…FKVK, IAYF…ITIV, and VPII…SIII. H313 contacts heme.

Belongs to the COX15/CtaA family. Type 2 subfamily. As to quaternary structure, interacts with CtaB. It depends on heme b as a cofactor.

Its subcellular location is the cell membrane. It carries out the reaction Fe(II)-heme o + 2 A + H2O = Fe(II)-heme a + 2 AH2. It functions in the pathway porphyrin-containing compound metabolism; heme A biosynthesis; heme A from heme O: step 1/1. Catalyzes the conversion of heme O to heme A by two successive hydroxylations of the methyl group at C8. The first hydroxylation forms heme I, the second hydroxylation results in an unstable dihydroxymethyl group, which spontaneously dehydrates, resulting in the formyl group of heme A. In Rickettsia prowazekii (strain Madrid E), this protein is Heme A synthase.